Here is a 333-residue protein sequence, read N- to C-terminus: tRNA-modifying protein YgfZ (333 aa).

Folate contacts are provided by tryptophan 33 and tryptophan 195.

This sequence belongs to the tRNA-modifying YgfZ family.

The protein localises to the cytoplasm. Folate-binding protein involved in regulating the level of ATP-DnaA and in the modification of some tRNAs. It is probably a key factor in regulatory networks that act via tRNA modification, such as initiation of chromosomal replication. The chain is tRNA-modifying protein YgfZ from Pectobacterium carotovorum subsp. carotovorum (strain PC1).